We begin with the raw amino-acid sequence, 321 residues long: Low affinity immunoglobulin epsilon Fc receptor (321 aa).

The Cytoplasmic segment spans residues 1–21 (MEEGQYSEIEELPRRRCCRRG). S-palmitoyl cysteine attachment occurs at residues cysteine 17 and cysteine 18. The helical; Signal-anchor for type II membrane protein transmembrane segment at 22–47 (TQIVLLGLVTAALWAGLLTLLLLWHW) threads the bilayer. At 48-321 (DTTQSLKQLE…LPTPSAPLHS (274 aa)) the chain is on the extracellular side. Asparagine 63 carries an N-linked (GlcNAc...) asparagine glycan. The interval 66-85 (QVSKNLESHHGDQMAQKSQS) is disordered. 3 consecutive repeats follow at residues 69 to 89 (KNLE…TQIS), 90 to 110 (QELE…LELS), and 111 to 131 (WNLN…LNER). 4 cysteine pairs are disulfide-bonded: cysteine 160-cysteine 288, cysteine 163-cysteine 174, cysteine 191-cysteine 282, and cysteine 259-cysteine 273. Positions 162–284 (TCPEKWINFQ…RKLGAWVCDR (123 aa)) constitute a C-type lectin domain. Ca(2+)-binding residues include glutamate 249, threonine 251, asparagine 269, and aspartate 270. The disordered stretch occupies residues 290-321 (PPASEGSAESMGPDSRPDPDGRLPTPSAPLHS). A glycan (O-linked (Xyl...) (chondroitin sulfate) serine) is linked at serine 296.

As to quaternary structure, homotrimer. Interacts (via C-type lectin domain) with IGHE (via CH3 region); this interaction regulates IgE homeostasis. Interacts (via the C-terminus) with CR2/CD21 (via Sushi domain 1 and 2). Post-translationally, N- and O-glycosylated. In terms of processing, the secreted form sCD23 is produced by ADAM10-mediated ectodomain shedding. In terms of tissue distribution, detected in urine (at protein level).

Its subcellular location is the cell membrane. The protein resides in the secreted. Its function is as follows. Low-affinity receptor for immunoglobulin E (IgE) and CR2/CD21. Has essential roles in the regulation of IgE production and in the differentiation of B cells. On B cells, initiates IgE-dependent antigen uptake and presentation to T cells. On macrophages, upon IgE binding and antigen cross-linking induces intracellular killing of parasites through activation of L-Arginine-nitric oxide pathway. In Homo sapiens (Human), this protein is Low affinity immunoglobulin epsilon Fc receptor (FCER2).